Consider the following 550-residue polypeptide: MSAQTLAISNLKPNTTRHLASFHPNIWGDRFLSCAAESTDIEDDMEQQVERLKEEVKKMIASADEPSQILNLIDLLQRLGVSYHFEKEIEEALQQVLNMNSDSDKDDDLHSVALRFRLLREQGLNVSCDVFNKFRDRNGHFIQTLKTDLQGMLSLYEAAHFRVHGEGILDDALAFTTTYLESIVPNLSPPLAAQISRTLRQPLRKSLARVEARHFISIYQEDTSHNEVLLTFAKLDFNLLQKLHQKELKYISLWWKDLDFVNKLPFTRDRVVEGYFWILGVYFEPQYHRARKFVTKVINVVSVIDDIYDAYGTLEELVVFTDAINRWDIDCIDQLPEYMKVCYKALLNVYEEIERALSEQGRSYRLHYAKEAMKKLVQAYLVEANWMNKNYVPTMDEYMSIALVSCAYPLLTVTSFVGMGDIATKEVFDWASNDPKIVRVASIICRLMDDIVSHEFEQKRGHIASSVECYMKQNGVSEEATRDEFNKQIVDAWKDINEEHLQPNYVPMPFRTRVVNSARIMDYLYKDDDEYTHVGELMKGSVAALLIDPA.

3 residues coordinate Mg(2+): aspartate 305, aspartate 309, and glutamate 457. Positions 305 to 309 match the DDXXD motif motif; that stretch reads DDIYD.

The protein belongs to the terpene synthase family. Mg(2+) is required as a cofactor.

Its function is as follows. Probable sesquiterpene synthase. In Ricinus communis (Castor bean), this protein is Probable terpene synthase 2 (TPS2).